The chain runs to 494 residues: Glutamyl-tRNA(Gln) amidotransferase subunit A (494 aa).

Catalysis depends on charge relay system residues K88 and S163. S187 (acyl-ester intermediate) is an active-site residue.

Belongs to the amidase family. GatA subfamily. As to quaternary structure, heterotrimer of A, B and C subunits.

The enzyme catalyses L-glutamyl-tRNA(Gln) + L-glutamine + ATP + H2O = L-glutaminyl-tRNA(Gln) + L-glutamate + ADP + phosphate + H(+). Functionally, allows the formation of correctly charged Gln-tRNA(Gln) through the transamidation of misacylated Glu-tRNA(Gln) in organisms which lack glutaminyl-tRNA synthetase. The reaction takes place in the presence of glutamine and ATP through an activated gamma-phospho-Glu-tRNA(Gln). In Corynebacterium diphtheriae (strain ATCC 700971 / NCTC 13129 / Biotype gravis), this protein is Glutamyl-tRNA(Gln) amidotransferase subunit A.